The following is a 100-amino-acid chain: Large ribosomal subunit protein bL28 (100 aa).

Belongs to the bacterial ribosomal protein bL28 family.

The sequence is that of Large ribosomal subunit protein bL28 from Gluconacetobacter diazotrophicus (strain ATCC 49037 / DSM 5601 / CCUG 37298 / CIP 103539 / LMG 7603 / PAl5).